The chain runs to 141 residues: Hemoglobin subunit alpha (141 aa).

Positions 1–141 (VLSANDKTNV…VSTVLTSKYR (141 aa)) constitute a Globin domain. The residue at position 3 (Ser3) is a Phosphoserine. N6-succinyllysine is present on Lys7. Position 8 is a phosphothreonine (Thr8). The residue at position 11 (Lys11) is an N6-succinyllysine. Position 16 is an N6-acetyllysine; alternate (Lys16). Lys16 carries the N6-succinyllysine; alternate modification. The residue at position 24 (Tyr24) is a Phosphotyrosine. The residue at position 35 (Ser35) is a Phosphoserine. Residue Lys40 is modified to N6-succinyllysine. Ser49 is subject to Phosphoserine. An O2-binding site is contributed by Gln58. His87 is a binding site for heme b. Residue Thr108 is modified to Phosphothreonine. 2 positions are modified to phosphoserine: Ser124 and Ser131. 2 positions are modified to phosphothreonine: Thr134 and Thr137. A Phosphoserine modification is found at Ser138.

It belongs to the globin family. As to quaternary structure, heterotetramer of two alpha chains and two beta chains. In terms of tissue distribution, red blood cells.

In terms of biological role, involved in oxygen transport from the lung to the various peripheral tissues. Functionally, hemopressin acts as an antagonist peptide of the cannabinoid receptor CNR1. Hemopressin-binding efficiently blocks cannabinoid receptor CNR1 and subsequent signaling. In Didelphis virginiana (North American opossum), this protein is Hemoglobin subunit alpha (HBA).